We begin with the raw amino-acid sequence, 172 residues long: Spermidine/spermine N(1)-acetyltransferase (172 aa).

The N-acetyltransferase domain occupies 3-172 (VKMKKCSRED…TDLIMAKTLI (170 aa)). Acetyl-CoA-binding positions include 96-98 (IYI), 105-109 (HGLGK), and 135-137 (NEN). Catalysis depends on Tyr142, which acts as the Proton donor. Residue Lys144 participates in acetyl-CoA binding.

It belongs to the acetyltransferase family. In terms of assembly, monomer.

It catalyses the reaction an alkane-alpha,omega-diamine + acetyl-CoA = an N-acetylalkane-alpha,omega-diamine + CoA + H(+). Involved in the protection against polyamine toxicity by regulating their concentration. Could also be involved in the negative control of sporulation as well as production of degradative enzymes such as alpha-amylase, levansucrase and alkaline phosphatase. Catalyzes the transfer of an acetyl group from acetyl coenzyme A (AcCoA) to an acceptor substrate and releases both CoA and the acetylated product. It possesses N1-acetyltransferase activity toward polyamine substrates including spermidine, spermine, aminopropylcadaverine, norspermidine, homospermidine, N(8)-acetylspermidine, diaminopropane and agmatine. This Bacillus subtilis (strain 168) protein is Spermidine/spermine N(1)-acetyltransferase.